A 408-amino-acid polypeptide reads, in one-letter code: Acetate kinase (408 aa).

Asn-7 lines the Mg(2+) pocket. Lys-14 is a binding site for ATP. Arg-98 is a substrate binding site. The Proton donor/acceptor role is filled by Asp-155. ATP is bound by residues 214-218, 289-291, and 337-341; these read HLGNG, DLR, and GVGEN. Glu-390 contributes to the Mg(2+) binding site.

The protein belongs to the acetokinase family. In terms of assembly, homodimer. It depends on Mg(2+) as a cofactor. The cofactor is Mn(2+).

Its subcellular location is the cytoplasm. The enzyme catalyses acetate + ATP = acetyl phosphate + ADP. It participates in metabolic intermediate biosynthesis; acetyl-CoA biosynthesis; acetyl-CoA from acetate: step 1/2. Its function is as follows. Catalyzes the formation of acetyl phosphate from acetate and ATP. Can also catalyze the reverse reaction. The protein is Acetate kinase of Cyanothece sp. (strain PCC 7425 / ATCC 29141).